A 98-amino-acid polypeptide reads, in one-letter code: NADH-ubiquinone oxidoreductase chain 4L (98 aa).

3 helical membrane-spanning segments follow: residues 1–21, 29–49, and 61–81; these read MSMV…GMLV, SLLC…VTIL, and IILL…LVMV.

This sequence belongs to the complex I subunit 4L family. In terms of assembly, core subunit of respiratory chain NADH dehydrogenase (Complex I) which is composed of 45 different subunits.

Its subcellular location is the mitochondrion inner membrane. It catalyses the reaction a ubiquinone + NADH + 5 H(+)(in) = a ubiquinol + NAD(+) + 4 H(+)(out). Core subunit of the mitochondrial membrane respiratory chain NADH dehydrogenase (Complex I) which catalyzes electron transfer from NADH through the respiratory chain, using ubiquinone as an electron acceptor. Part of the enzyme membrane arm which is embedded in the lipid bilayer and involved in proton translocation. The chain is NADH-ubiquinone oxidoreductase chain 4L (MT-ND4L) from Odobenus rosmarus rosmarus (Atlantic walrus).